The primary structure comprises 160 residues: Transcription elongation factor GreA (160 aa).

Residues 1 to 71 (MAEKTYPMTK…GQISTLETQI (71 aa)) are a coiled coil.

This sequence belongs to the GreA/GreB family.

Functionally, necessary for efficient RNA polymerase transcription elongation past template-encoded arresting sites. The arresting sites in DNA have the property of trapping a certain fraction of elongating RNA polymerases that pass through, resulting in locked ternary complexes. Cleavage of the nascent transcript by cleavage factors such as GreA or GreB allows the resumption of elongation from the new 3'terminus. GreA releases sequences of 2 to 3 nucleotides. This is Transcription elongation factor GreA from Streptococcus uberis (strain ATCC BAA-854 / 0140J).